The primary structure comprises 176 residues: Nicotinamide-nucleotide adenylyltransferase (176 aa).

This sequence belongs to the archaeal NMN adenylyltransferase family.

Its subcellular location is the cytoplasm. The catalysed reaction is beta-nicotinamide D-ribonucleotide + ATP + H(+) = diphosphate + NAD(+). The protein operates within cofactor biosynthesis; NAD(+) biosynthesis; NAD(+) from nicotinamide D-ribonucleotide: step 1/1. The chain is Nicotinamide-nucleotide adenylyltransferase from Halorubrum lacusprofundi (strain ATCC 49239 / DSM 5036 / JCM 8891 / ACAM 34).